The primary structure comprises 202 residues: Cytochrome c oxidase assembly protein CtaG (202 aa).

Topologically, residues 1–14 (MSENAGTPKKQGRN) are cytoplasmic. Residues 15–37 (NGAVVMMCLSFVFGMGAMSYAAV) form a helical; Signal-anchor for type II membrane protein membrane-spanning segment. Over 38–202 (PLYRIFCQVT…GGAEKIEKKL (165 aa)) the chain is Periplasmic.

The protein belongs to the COX11/CtaG family.

The protein localises to the cell inner membrane. Its function is as follows. Exerts its effect at some terminal stage of cytochrome c oxidase synthesis, probably by being involved in the insertion of the copper B into subunit I. This Rhizobium johnstonii (strain DSM 114642 / LMG 32736 / 3841) (Rhizobium leguminosarum bv. viciae) protein is Cytochrome c oxidase assembly protein CtaG.